We begin with the raw amino-acid sequence, 298 residues long: 2-dehydropantoate 2-reductase (298 aa).

Residues 7-12 (GGGSVG), N98, and A124 contribute to the NADP(+) site. N98 contributes to the substrate binding site. K179 serves as the catalytic Proton donor. N183, N187, N197, and S246 together coordinate substrate. E258 is a binding site for NADP(+).

This sequence belongs to the ketopantoate reductase family.

It localises to the cytoplasm. The enzyme catalyses (R)-pantoate + NADP(+) = 2-dehydropantoate + NADPH + H(+). Its pathway is cofactor biosynthesis; (R)-pantothenate biosynthesis; (R)-pantoate from 3-methyl-2-oxobutanoate: step 2/2. Functionally, catalyzes the NADPH-dependent reduction of ketopantoate into pantoic acid. The chain is 2-dehydropantoate 2-reductase (panE) from Bacillus subtilis (strain 168).